A 62-amino-acid polypeptide reads, in one-letter code: Large ribosomal subunit protein uL30 (62 aa).

This sequence belongs to the universal ribosomal protein uL30 family. Part of the 50S ribosomal subunit.

The protein is Large ribosomal subunit protein uL30 of Nitrosospira multiformis (strain ATCC 25196 / NCIMB 11849 / C 71).